Consider the following 348-residue polypeptide: Ribonuclease H (348 aa).

Polar residues predominate over residues 54-65 (NTTSNYGSSTHA). The interval 54-81 (NTTSNYGSSTHAGGQVSKPHTTQKRVHR) is disordered. Residues 184–346 (YNKSMNVYCD…ADFLAKKGAS (163 aa)) enclose the RNase H type-1 domain. Mg(2+)-binding residues include Asp-193, Glu-235, Asp-264, and Asp-338.

The protein belongs to the RNase H family. Mg(2+) serves as cofactor.

It carries out the reaction Endonucleolytic cleavage to 5'-phosphomonoester.. Its function is as follows. Endonuclease that specifically degrades the RNA of RNA-DNA hybrids. This chain is Ribonuclease H (RNH1), found in Saccharomyces cerevisiae (strain ATCC 204508 / S288c) (Baker's yeast).